A 553-amino-acid chain; its full sequence is Putative transport protein YidE (553 aa).

5 consecutive transmembrane segments (helical) span residues 4–24, 28–48, 65–85, 95–115, and 158–178; these read IALT…IGNV, GVGL…HFVS, FGLI…FFAS, LFAV…HKLF, and MSYA…MWML. RCK C-terminal domains follow at residues 191 to 276 and 279 to 361; these read QQHE…VIGQ and DTSL…VLGN. 6 consecutive transmembrane segments (helical) span residues 371-391, 393-413, 439-459, 464-484, 493-513, and 533-553; these read MLPV…PVFV, GFPA…ALIL, IVLF…HTLV, LSWI…VGIL, YLTM…LAFA, and LVMF…WSIG.

The protein belongs to the AAE transporter (TC 2.A.81) family. YidE subfamily.

Its subcellular location is the cell membrane. In Escherichia coli O127:H6 (strain E2348/69 / EPEC), this protein is Putative transport protein YidE.